Reading from the N-terminus, the 314-residue chain is Mitochondrial 2-oxoglutarate/malate carrier protein (314 aa).

N-acetylalanine is present on Ala2. Phosphoserine is present on Ser6. Solcar repeat units lie at residues 23 to 108, 117 to 208, and 217 to 306; these read VKFL…LFER, PGFL…SKQF, and DNIL…MNKA. The helical transmembrane segment at 24 to 42 threads the bilayer; sequence KFLFGGLAGMGATVFVQPL. Lys57 is subject to N6-succinyllysine. An N6-acetyllysine modification is found at Lys73. The chain crosses the membrane as a helical span at residues 83–101; the sequence is GLSAGLLRQATYTTTRLGI. A Phosphotyrosine modification is found at Tyr102. The next 3 helical transmembrane spans lie at 119–140, 183–202, and 222–240; these read FLLK…GTPA, GCIP…LASY, and HFCA…SMPV. The residue at position 256 (Lys256) is an N6-acetyllysine. Residues 281–300 form a helical membrane-spanning segment; the sequence is GFTPYYARLGPHTVLTFIFL.

Belongs to the mitochondrial carrier (TC 2.A.29) family. Interacts with SMIM26.

Its subcellular location is the mitochondrion inner membrane. The catalysed reaction is (S)-malate(in) + 2-oxoglutarate(out) = (S)-malate(out) + 2-oxoglutarate(in). The enzyme catalyses malonate(in) + 2-oxoglutarate(out) = malonate(out) + 2-oxoglutarate(in). It carries out the reaction succinate(in) + 2-oxoglutarate(out) = succinate(out) + 2-oxoglutarate(in). It catalyses the reaction maleate(in) + 2-oxoglutarate(out) = maleate(out) + 2-oxoglutarate(in). The catalysed reaction is oxaloacetate(in) + 2-oxoglutarate(out) = oxaloacetate(out) + 2-oxoglutarate(in). In terms of biological role, catalyzes the transport of 2-oxoglutarate (alpha-oxoglutarate) across the inner mitochondrial membrane in an electroneutral exchange for malate. Can also exchange 2-oxoglutarate for other dicarboxylic acids such as malonate, succinate, maleate and oxaloacetate, although with lower affinity. Contributes to several metabolic processes, including the malate-aspartate shuttle, the oxoglutarate/isocitrate shuttle, in gluconeogenesis from lactate, and in nitrogen metabolism. Maintains mitochondrial fusion and fission events, and the organization and morphology of cristae. Involved in the regulation of apoptosis. Helps protect from cytotoxic-induced apoptosis by modulating glutathione levels in mitochondria. In Mus musculus (Mouse), this protein is Mitochondrial 2-oxoglutarate/malate carrier protein (Slc25a11).